The chain runs to 362 residues: 3-dehydroquinate synthase (362 aa).

NAD(+) is bound by residues 95-99, 119-120, Lys-132, and Lys-141; these read GVVGD and TT. 3 residues coordinate Zn(2+): Glu-174, His-238, and His-255.

Belongs to the sugar phosphate cyclases superfamily. Dehydroquinate synthase family. The cofactor is Co(2+). Zn(2+) serves as cofactor. Requires NAD(+) as cofactor.

It localises to the cytoplasm. The enzyme catalyses 7-phospho-2-dehydro-3-deoxy-D-arabino-heptonate = 3-dehydroquinate + phosphate. The protein operates within metabolic intermediate biosynthesis; chorismate biosynthesis; chorismate from D-erythrose 4-phosphate and phosphoenolpyruvate: step 2/7. Functionally, catalyzes the conversion of 3-deoxy-D-arabino-heptulosonate 7-phosphate (DAHP) to dehydroquinate (DHQ). In Chlorobium luteolum (strain DSM 273 / BCRC 81028 / 2530) (Pelodictyon luteolum), this protein is 3-dehydroquinate synthase.